Here is a 192-residue protein sequence, read N- to C-terminus: GTP cyclohydrolase 1 (192 aa).

Zn(2+) is bound by residues Cys-82, His-85, and Cys-153.

This sequence belongs to the GTP cyclohydrolase I family. As to quaternary structure, toroid-shaped homodecamer, composed of two pentamers of five dimers.

It carries out the reaction GTP + H2O = 7,8-dihydroneopterin 3'-triphosphate + formate + H(+). Its pathway is cofactor biosynthesis; 7,8-dihydroneopterin triphosphate biosynthesis; 7,8-dihydroneopterin triphosphate from GTP: step 1/1. This chain is GTP cyclohydrolase 1, found in Rickettsia bellii (strain OSU 85-389).